The primary structure comprises 347 residues: MKKQALTIIFLLVSLVTGIQAKENDHWYLGTKMGWSDFNILEYRSKDITPFDTKIDTKNPLGAPVFGLFLGYEFNPYFSFEIENDTTGFSPHLIFQKNEQNIQINSLQLATKLSYPITDDFHIYTQLGGMMFWDNLSFKKDLQNIFTEKSRLIPNVSLGAEYIFNKKFITRLDYTWKSNIAKIMNLSMKPVLGDVALSFGWKFGKSNINEIFSSYIPQSSDKQYVALNENINFPFNSTELKPISHDKLQKLQKEIKNIKSKNIFIMLSGHADRIGNKEYNQKLSENRAYSIKNYFTSHGISQDKISIQGMGNEFSLTNQICKDVSDRPLLISCLAPDRRVEIEVLSD.

The N-terminal stretch at 1–21 (MKKQALTIIFLLVSLVTGIQA) is a signal peptide. The next 8 membrane-spanning stretches (beta stranded) occupy residues 26–36 (HWYLGTKMGWS), 63–74 (APVFGLFLGYEF), 78–86 (FSFEIENDT), 105–116 (NSLQLATKLSYP), 121–129 (FHIYTQLGG), 154–163 (PNVSLGAEYI), 168–175 (FITRLDYT), and 194–202 (DVALSFGWK). A hinge-like region spans residues 207-218 (NINEIFSSYIPQ). Residues 220 to 347 (SDKQYVALNE…RRVEIEVLSD (128 aa)) form the OmpA-like domain. The cysteines at positions 321 and 333 are disulfide-linked.

This sequence belongs to the outer membrane OOP (TC 1.B.6) superfamily. OmpA family. In terms of assembly, monomer and homodimer.

Its subcellular location is the cell outer membrane. With TolR probably plays a role in maintaining the position of the peptidoglycan cell wall in the periplasm. Acts as a porin with low permeability that allows slow penetration of small solutes; an internal gate slows down solute passage. This Buchnera aphidicola subsp. Schizaphis graminum (strain Sg) protein is Outer membrane protein A.